The chain runs to 159 residues: S-ribosylhomocysteine lyase 1 (159 aa).

Residues H54, H58, and C124 each contribute to the Fe cation site.

It belongs to the LuxS family. Homodimer. Fe cation serves as cofactor.

The enzyme catalyses S-(5-deoxy-D-ribos-5-yl)-L-homocysteine = (S)-4,5-dihydroxypentane-2,3-dione + L-homocysteine. In terms of biological role, involved in the synthesis of autoinducer 2 (AI-2) which is secreted by bacteria and is used to communicate both the cell density and the metabolic potential of the environment. The regulation of gene expression in response to changes in cell density is called quorum sensing. Catalyzes the transformation of S-ribosylhomocysteine (RHC) to homocysteine (HC) and 4,5-dihydroxy-2,3-pentadione (DPD). The protein is S-ribosylhomocysteine lyase 1 of Lactobacillus delbrueckii subsp. bulgaricus (strain ATCC BAA-365 / Lb-18).